The primary structure comprises 301 residues: Protoheme IX farnesyltransferase (301 aa).

A run of 9 helical transmembrane segments spans residues 16–36 (VVAL…PGMP), 41–61 (IQSG…AAAI), 93–113 (VFAG…VNLI), 114–134 (TAVL…VYLK), 141–161 (IVIG…AVTG), 172–192 (SLLV…LAIF), 217–237 (QILL…ATGM), 238–258 (SGVF…WYAW), and 273–293 (FGYS…DHWL).

This sequence belongs to the UbiA prenyltransferase family. Protoheme IX farnesyltransferase subfamily.

Its subcellular location is the cell inner membrane. It catalyses the reaction heme b + (2E,6E)-farnesyl diphosphate + H2O = Fe(II)-heme o + diphosphate. It functions in the pathway porphyrin-containing compound metabolism; heme O biosynthesis; heme O from protoheme: step 1/1. Converts heme B (protoheme IX) to heme O by substitution of the vinyl group on carbon 2 of heme B porphyrin ring with a hydroxyethyl farnesyl side group. This is Protoheme IX farnesyltransferase from Xylella fastidiosa (strain Temecula1 / ATCC 700964).